The sequence spans 489 residues: GTPase Der (489 aa).

2 EngA-type G domains span residues 3-166 (PVVA…AEAM) and 200-373 (IKLA…ESAT). GTP-binding positions include 9–16 (GRPNVGKS), 56–60 (DTGGI), 118–121 (NKVD), 206–213 (GKPNVGKS), 253–257 (DTAGV), and 318–321 (NKWD). In terms of domain architecture, KH-like spans 374–458 (RRVSTSMLTR…PIQVRFQEGG (85 aa)).

This sequence belongs to the TRAFAC class TrmE-Era-EngA-EngB-Septin-like GTPase superfamily. EngA (Der) GTPase family. As to quaternary structure, associates with the 50S ribosomal subunit.

In terms of biological role, GTPase that plays an essential role in the late steps of ribosome biogenesis. This chain is GTPase Der, found in Shewanella loihica (strain ATCC BAA-1088 / PV-4).